Reading from the N-terminus, the 432-residue chain is Nuclear pore complex-interacting protein family member B9 (432 aa).

Disordered regions lie at residues 260–280 (RMGR…NSLS) and 353–420 (SPLP…LRTR). Over residues 270–280 (QQHSITDNSLS) the composition is skewed to polar residues. Residues 374 to 402 (EVEKPPKPKRWRVDEVEQSPKPKRQREAE) show a composition bias toward basic and acidic residues. Residues 408–420 (KPKRRRLSKLRTR) show a composition bias toward basic residues.

It belongs to the NPIP family.

The chain is Nuclear pore complex-interacting protein family member B9 (NPIPB9) from Homo sapiens (Human).